The following is a 192-amino-acid chain: Large ribosomal subunit protein bL9 (192 aa).

A disordered region spans residues 173-192 (ALRPEDFFDPEADGLDENEA). Residues 179–192 (FFDPEADGLDENEA) are compositionally biased toward acidic residues.

This sequence belongs to the bacterial ribosomal protein bL9 family.

In terms of biological role, binds to the 23S rRNA. The chain is Large ribosomal subunit protein bL9 from Rhizobium etli (strain ATCC 51251 / DSM 11541 / JCM 21823 / NBRC 15573 / CFN 42).